Here is a 587-residue protein sequence, read N- to C-terminus: Aspartate--tRNA ligase (587 aa).

Glu175 contributes to the L-aspartate binding site. The aspartate stretch occupies residues 199–202; the sequence is QQFK. Residues Arg221 and His446 each coordinate L-aspartate. 221 to 223 serves as a coordination point for ATP; sequence RDE. Glu480 provides a ligand contact to ATP. Arg487 serves as a coordination point for L-aspartate. 532 to 535 contacts ATP; the sequence is GVDR.

It belongs to the class-II aminoacyl-tRNA synthetase family. Type 1 subfamily. In terms of assembly, homodimer.

It localises to the cytoplasm. It carries out the reaction tRNA(Asp) + L-aspartate + ATP = L-aspartyl-tRNA(Asp) + AMP + diphosphate. Catalyzes the attachment of L-aspartate to tRNA(Asp) in a two-step reaction: L-aspartate is first activated by ATP to form Asp-AMP and then transferred to the acceptor end of tRNA(Asp). This chain is Aspartate--tRNA ligase, found in Streptomyces coelicolor (strain ATCC BAA-471 / A3(2) / M145).